Consider the following 160-residue polypeptide: MKVAVYPGTFDPITNGHLDIIRRAVSIFDRVVVGVAADNYKKTLFSLEERVELVRTVTRDIPGVTVKSFSGLLVDFARREEAVAIVRGLRAVSDFEYEFQMSIMNKKLASDLETVFLMTATEYSFLSSSIIRQAASLGGCIHGLVPPEVERVLLKRYGFL.

A substrate-binding site is contributed by Thr-9. ATP is bound by residues 9-10 (TF) and His-17. Residues Lys-41, Leu-73, and Arg-87 each contribute to the substrate site. Residues 88–90 (GLR), Glu-98, and 123–129 (YSFLSSS) contribute to the ATP site.

It belongs to the bacterial CoaD family. Homohexamer. Requires Mg(2+) as cofactor.

Its subcellular location is the cytoplasm. It carries out the reaction (R)-4'-phosphopantetheine + ATP + H(+) = 3'-dephospho-CoA + diphosphate. The protein operates within cofactor biosynthesis; coenzyme A biosynthesis; CoA from (R)-pantothenate: step 4/5. Functionally, reversibly transfers an adenylyl group from ATP to 4'-phosphopantetheine, yielding dephospho-CoA (dPCoA) and pyrophosphate. This is Phosphopantetheine adenylyltransferase from Moorella thermoacetica (strain ATCC 39073 / JCM 9320).